Consider the following 138-residue polypeptide: Basic phospholipase A2 Tpu-G6D49 (138 aa).

The first 16 residues, 1–16 (MRTLWIMAVLLVGVEG), serve as a signal peptide directing secretion. 7 cysteine pairs are disulfide-bonded: cysteine 42–cysteine 131, cysteine 44–cysteine 60, cysteine 59–cysteine 111, cysteine 65–cysteine 138, cysteine 66–cysteine 104, cysteine 73–cysteine 97, and cysteine 91–cysteine 102. Ca(2+) is bound by residues tyrosine 43, glycine 45, and glycine 47. Histidine 63 is a catalytic residue. Aspartate 64 is a binding site for Ca(2+). Aspartate 105 is a catalytic residue.

As to quaternary structure, monomer. The cofactor is Ca(2+). In terms of tissue distribution, expressed by the venom gland.

It is found in the secreted. It carries out the reaction a 1,2-diacyl-sn-glycero-3-phosphocholine + H2O = a 1-acyl-sn-glycero-3-phosphocholine + a fatty acid + H(+). Its function is as follows. Snake venom phospholipase A2 (PLA2) that impairs hemostasis. It weakly inhibits ADP-induced platelet aggregation when tested on platelet rich plasma from human and rabbit blood (15-25% of inhibition at 5-10 ug of enzyme), and dose-dependently inhibits blood coagulation, possibly by inhibiting thrombin activation. Also induces local edema a few hours after injection in the hind foot. Exhibits high hydrolytic activities toward L-dipalmitoyl phosphatidylcholine. PLA2 catalyzes the calcium-dependent hydrolysis of the 2-acyl groups in 3-sn-phosphoglycerides. This Craspedocephalus puniceus (Flat-nosed pitviper) protein is Basic phospholipase A2 Tpu-G6D49.